The sequence spans 162 residues: 2-C-methyl-D-erythritol 2,4-cyclodiphosphate synthase (162 aa).

Residues D9 and H11 each coordinate a divalent metal cation. Residues 9 to 11 (DVH) and 35 to 36 (HS) each bind 4-CDP-2-C-methyl-D-erythritol 2-phosphate. H43 lines the a divalent metal cation pocket. Residues 57-59 (DIG), 62-66 (FPDTD), 133-136 (TTTE), F140, and R143 each bind 4-CDP-2-C-methyl-D-erythritol 2-phosphate.

This sequence belongs to the IspF family. As to quaternary structure, homotrimer. It depends on a divalent metal cation as a cofactor.

The catalysed reaction is 4-CDP-2-C-methyl-D-erythritol 2-phosphate = 2-C-methyl-D-erythritol 2,4-cyclic diphosphate + CMP. It participates in isoprenoid biosynthesis; isopentenyl diphosphate biosynthesis via DXP pathway; isopentenyl diphosphate from 1-deoxy-D-xylulose 5-phosphate: step 4/6. Functionally, involved in the biosynthesis of isopentenyl diphosphate (IPP) and dimethylallyl diphosphate (DMAPP), two major building blocks of isoprenoid compounds. Catalyzes the conversion of 4-diphosphocytidyl-2-C-methyl-D-erythritol 2-phosphate (CDP-ME2P) to 2-C-methyl-D-erythritol 2,4-cyclodiphosphate (ME-CPP) with a corresponding release of cytidine 5-monophosphate (CMP). The chain is 2-C-methyl-D-erythritol 2,4-cyclodiphosphate synthase from Histophilus somni (strain 129Pt) (Haemophilus somnus).